A 390-amino-acid polypeptide reads, in one-letter code: MQLLNSFLGFAASIAVLASSADAAPTLYKRKSKSNTNTAKSVAILDGVGVNNTFGVISYREKFPMDYHIWHTAPSTGKTYLQPWNDAVEPSTYYIDEGTFLRTGLKFAYIGDNMDLAFTNHTDWKASKHDDGTHRVDLSQRKPANNFMATQRCGKLDPFGYQLKRSKKVFQACGTQVFVGSGRSIDCQWMDSVALNLSRYYGNTEALSSLPLPRNLSADIPAKSSRLFPHGIYNFNFSAPNKRMQRFTASEATTVNGQNQSVYLTYDVPYGRSLYYYTSCALEFRFTNEFFPMDVTPNDGSAQFVVYNMSGNPKKQTTSSKGPTRLYEVARFNCTTRGCEYTQNIPCPRAGHSHTYELAPASPNTSISWIQSYSPRIGVTLQVYSNANFD.

It belongs to the but2 family. Interacts with but1 and uba3.

This is Uba3-binding protein but2 (but2) from Schizosaccharomyces pombe (strain 972 / ATCC 24843) (Fission yeast).